The chain runs to 241 residues: 1-(5-phosphoribosyl)-5-[(5-phosphoribosylamino)methylideneamino] imidazole-4-carboxamide isomerase (241 aa).

The Proton acceptor role is filled by Asp11. Residue Asp130 is the Proton donor of the active site.

This sequence belongs to the HisA/HisF family.

The protein localises to the cytoplasm. The enzyme catalyses 1-(5-phospho-beta-D-ribosyl)-5-[(5-phospho-beta-D-ribosylamino)methylideneamino]imidazole-4-carboxamide = 5-[(5-phospho-1-deoxy-D-ribulos-1-ylimino)methylamino]-1-(5-phospho-beta-D-ribosyl)imidazole-4-carboxamide. It functions in the pathway amino-acid biosynthesis; L-histidine biosynthesis; L-histidine from 5-phospho-alpha-D-ribose 1-diphosphate: step 4/9. The sequence is that of 1-(5-phosphoribosyl)-5-[(5-phosphoribosylamino)methylideneamino] imidazole-4-carboxamide isomerase from Acidothermus cellulolyticus (strain ATCC 43068 / DSM 8971 / 11B).